A 457-amino-acid polypeptide reads, in one-letter code: Phosphomethylpyrimidine synthase (457 aa).

Residues Asn80, Met109, Tyr139, His175, 195-197, 236-239, and Glu275 each bind substrate; these read SRG and DSLR. His279 provides a ligand contact to Zn(2+). Tyr302 lines the substrate pocket. Residue His343 coordinates Zn(2+). 3 residues coordinate [4Fe-4S] cluster: Cys423, Cys426, and Cys431.

This sequence belongs to the ThiC family. Requires [4Fe-4S] cluster as cofactor.

The enzyme catalyses 5-amino-1-(5-phospho-beta-D-ribosyl)imidazole + S-adenosyl-L-methionine = 4-amino-2-methyl-5-(phosphooxymethyl)pyrimidine + CO + 5'-deoxyadenosine + formate + L-methionine + 3 H(+). It participates in cofactor biosynthesis; thiamine diphosphate biosynthesis. Its function is as follows. Catalyzes the synthesis of the hydroxymethylpyrimidine phosphate (HMP-P) moiety of thiamine from aminoimidazole ribotide (AIR) in a radical S-adenosyl-L-methionine (SAM)-dependent reaction. The polypeptide is Phosphomethylpyrimidine synthase (Nostoc sp. (strain PCC 7120 / SAG 25.82 / UTEX 2576)).